The following is a 167-amino-acid chain: Homing endonuclease I-ApeII (167 aa).

It belongs to the LAGLIDADG endonuclease family.

Functionally, endonuclease involved in rRNA intron I-gamma homing. This chain is Homing endonuclease I-ApeII (apeII), found in Aeropyrum pernix (strain ATCC 700893 / DSM 11879 / JCM 9820 / NBRC 100138 / K1).